The sequence spans 681 residues: MSKTFLRPKVSSTKVTDWVDPSFDDFLECRDVSTITATSLGVNNSSHRRKNGPSTLESSRFPARKRGNLSSLEQIYGLENSKEYLSENEPWVDKYKPETQHELAVHKKKIEEVETWLKAQVLERQPKQGGSILLITGPPGCGKTTTIKILSKEHGIQVQEWINPVLPDFQKDDFKGMFNTESSFHMFPYQSQIAVFKEFLLRATKYNKLQMLGDDLRTDKKIILVEDLPNQFYRDSHTLHEVLRKYVRIGRCPLIFIISDSLSGDNNQRLLFPKEIQEECSISNISFNPVAPTIMMKFLNRIVTIEANKNGGKITVPDKTSLELLCQGCSGDIRSAINSLQFSSSKGENNLWPRKKGMSLKSDAVLSKSKQRKKPDRVFENQEVQAIGGKDVSLFLFRALGKILYCKRASLTELDSPRLPSHLSEYERDTLLVEPEEVVEMSHMPGDLFNLYLHQNYIDFFMEIDDIVRASEFLSFADILSGDWNTRSLLREYSTSIATRGVMHSNKARGYAHCQGGGSSFRPLHKPQWFLINKKYRENYLAAKALFPDFCLPALCLQTQLLPYLALLTIPMRNQAQISFIQDIGRLPLKRHFGRLKMEALTDREHGMIDPDSGDEAQLNGGHSAEESLGEPTQATALETWSLPLSQNSASELPASQPQPFSAQGDMEENIIIEDYESDGT.

The short motif at 17 to 25 is the RAD1-binding motif element; it reads DWVDPSFDD. A disordered region spans residues 42–63; it reads VNNSSHRRKNGPSTLESSRFPA. Position 55 is a phosphothreonine (Thr55). Ser71 and Ser86 each carry phosphoserine. 137–144 is an ATP binding site; the sequence is GPPGCGKT. Ser359 bears the Phosphoserine mark. Residues 432–681 are interaction with MCM7; the sequence is LVEPEEVVEM…IIEDYESDGT (250 aa). The disordered stretch occupies residues 606 to 681; the sequence is HGMIDPDSGD…IIEDYESDGT (76 aa). The span at 631 to 662 shows a compositional bias: polar residues; that stretch reads EPTQATALETWSLPLSQNSASELPASQPQPFS. Thr633 bears the Phosphothreonine mark. Residues Ser646 and Ser656 each carry the phosphoserine modification. Acidic residues predominate over residues 666-681; it reads DMEENIIIEDYESDGT.

Belongs to the rad17/RAD24 family. Part of a DNA-binding complex containing RFC2, RFC3, RFC4 and RFC5. Interacts with RAD1 and RAD9 within the 9-1-1 (RAD1-RAD9-HUS1) complex. Interacts with RAD9B, POLE, SNU13 and MCM7. DNA damage promotes interaction with ATR or ATM and disrupts interaction with the 9-1-1 (RAD1-RAD9-HUS1) complex. Interacts (when phosphorylated) with NBN; promoting recruitment of the MRN complex to DNA damage sites. Phosphorylated. Phosphorylation on Ser-646 and Ser-656 is cell cycle-regulated, enhanced by genotoxic stress, and required for activation of checkpoint signaling. Phosphorylation is mediated by ATR upon UV or replication arrest, whereas it may be mediated both by ATR and ATM upon ionizing radiation. Phosphorylation on both sites is required for interaction with RAD1 but dispensable for interaction with RFC3 or RFC4. Phosphorylation at Thr-633 by ATM in response to DNA damage promotes interaction with NBN and recruitment of the MRN complex to DNA damage sites.

It localises to the nucleus. Its subcellular location is the chromosome. Its function is as follows. Essential for sustained cell growth, maintenance of chromosomal stability, and ATR-dependent checkpoint activation upon DNA damage. Has a weak ATPase activity required for binding to chromatin. Participates in the recruitment of the 9-1-1 (RAD1-RAD9-HUS1) complex and RHNO1 onto chromatin, and in CHEK1 activation. Involved in homologous recombination by mediating recruitment of the MRN complex to DNA damage sites. May also serve as a sensor of DNA replication progression. This chain is Cell cycle checkpoint protein RAD17 (RAD17), found in Pongo abelii (Sumatran orangutan).